The following is a 72-amino-acid chain: Small, acid-soluble spore protein C (72 aa).

The protein belongs to the alpha/beta-type SASP family.

SASP are bound to spore DNA. They are double-stranded DNA-binding proteins that cause DNA to change to an a-like conformation. They protect the DNA backbone from chemical and enzymatic cleavage and are thus involved in dormant spore's high resistance to UV light. In Priestia megaterium (Bacillus megaterium), this protein is Small, acid-soluble spore protein C (sasP-C).